The sequence spans 744 residues: Prestin (744 aa).

The Cytoplasmic segment spans residues 1–75; that stretch reads MDHAEENEIP…PITKWLPAYK (75 aa). Residues 76–105 traverse the membrane as a helical segment; it reads FKEYVLGDLVSGISTGVLQLPQGLAFAMLA. Residues 106–108 lie on the Extracellular side of the membrane; that stretch reads AVP. Residues 109–126 traverse the membrane as a helical segment; that stretch reads PVFGLYSSFYPVIMYCFF. Over 127-137 the chain is Cytoplasmic; sequence GTSRHISIGPF. A helical membrane pass occupies residues 138–151; sequence AVISLMIGGVAVRL. At 152–168 the chain is on the extracellular side; that stretch reads VPDDIVIPGGVNATNGT. Residues 158 to 168 carry the Involved in motor function motif; sequence IPGGVNATNGT. 2 N-linked (GlcNAc...) asparagine glycosylation sites follow: N163 and N166. Residues 169 to 196 form a helical membrane-spanning segment; the sequence is EARDALRVKVAMSVTLLSGIIQFCLGVC. Topologically, residues 197–206 are cytoplasmic; sequence RFGFVAIYLT. Residues 207-230 form a helical membrane-spanning segment; sequence EPLVRGFTTAAAVHVFTSMLKYLF. The Extracellular portion of the chain corresponds to 231 to 241; the sequence is GVKTKRYSGIF. Positions 242 to 253 form an intramembrane region, helical; it reads SVVYSTVAVLQN. The Extracellular portion of the chain corresponds to 254–258; sequence VKNLN. Residues 259 to 282 form a helical membrane-spanning segment; that stretch reads VCSLGVGLMVFGLLLGGKEFNERF. Topologically, residues 283–291 are cytoplasmic; sequence KEKLPAPIP. The helical transmembrane segment at 292 to 307 threads the bilayer; it reads LEFFAVVMGTGISAGF. At 308-332 the chain is on the extracellular side; the sequence is NLHESYSVDVVGTLPLGLLPPANPD. The helical transmembrane segment at 333 to 367 threads the bilayer; sequence TSLFHLVYVDAIAIAIVGFSVTISMAKTLANKHGY. Residues 368–370 are Cytoplasmic-facing; sequence QVD. Residues 371 to 388 form a helical membrane-spanning segment; it reads GNQELIALGICNSIGSLF. Residues 389–396 lie on the Extracellular side of the membrane; sequence QTFSISCS. A helical membrane pass occupies residues 397–406; the sequence is LSRSLVQEGT. S398 is a binding site for salicylate. Over 407–410 the chain is Cytoplasmic; it reads GGKT. The helical transmembrane segment at 411–432 threads the bilayer; it reads QLAGCLASLMILLVILATGFLF. Residues 433–436 lie on the Extracellular side of the membrane; it reads ESLP. Residues 437-464 form a helical membrane-spanning segment; the sequence is QAVLSAIVIVNLKGMFMQFSDLPFFWRT. Residue S465 is a topological domain, cytoplasmic. The helical transmembrane segment at 466-481 threads the bilayer; the sequence is KIELTIWLTTFVSSLF. The Extracellular segment spans residues 482–483; it reads LG. The helical transmembrane segment at 484 to 504 threads the bilayer; it reads LDYGLITAVIIALLTVIYRTQ. The tract at residues 505–718 is extended region for STAS domain; it reads SPSYKVLGQL…AVLGSQVREA (214 aa). The Cytoplasmic portion of the chain corresponds to 505 to 744; that stretch reads SPSYKVLGQL…PNATPTTPEA (240 aa). The STAS domain maps to 525–713; sequence AYEEVKEIPG…HSIHDAVLGS (189 aa). Residues 720–744 form a disordered region; it reads AEQEATASLPQEDMEPNATPTTPEA.

The protein belongs to the SLC26A/SulP transporter (TC 2.A.53) family. In terms of assembly, homodimer. Interacts (via STAS domain) with CALM; this interaction is calcium-dependent and the STAS domain interacts with only one lobe of CALM which is an elongated conformation. Interacts with MYH1. As to expression, expressed in the outer hair cells (OHC) of the organ of Corti of the inner ear. Also weak expression in brain and testis. Very weakly expressed in heart, spleen, muscle and lactating mammary glands. Expressed in cardiac myocytes (at protein level), both in the surface sarcolemma and along the t-tubule. Weakly expressed in skeletal muscle cells (at protein level).

It localises to the lateral cell membrane. It catalyses the reaction 2 hydrogencarbonate(in) + chloride(out) = 2 hydrogencarbonate(out) + chloride(in). In terms of biological role, voltage-sensitive motor protein that drives outer hair cell (OHC) electromotility (eM) and participates in sound amplification in the hearing organ. Converts changes in the transmembrane electric potential into mechanical displacements resulting in the coupling of its expansion to movement of a charged voltage sensor across the lipid membrane. The nature of the voltage sensor is not completely clear, and two models compete. In the first model, acts as an incomplete transporter where intracellular chloride anion acts as extrinsic voltage sensor that drives conformational change in the protein which is sufficient to produce a length change in the plane of the membrane and hence in the length of the OHC. The second model in which multiple charged amino acid residues are distributed at the intracellular and extracellular membrane interfaces that form an intrinsic voltage sensor, whose movement produces the non-linear capacitance (NLC). However, the effective voltage sensor may be the result of a hybrid voltage sensor, assembled from intrinsic charge (charged residues) and extrinsic charge (bound anion). Notably, binding of anions to the anion-binding pocket partially neutralizes the intrinsic positive charge rather than to form an electrically negative sensor, therefore remaining charge may serve as voltage sensor that, after depolarization, moves from down (expanded state) to up (contracted) conformation, which is accompanied by an eccentric contraction of the intermembrane cross-sectional area of the protein as well as a major increase in the hydrophobic thickness of the protein having as consequences the plasma membrane thickening and the cell contraction after membrane depolarization. The anion-binding pocket transits from the inward-open (Down) state, where it is exposed toward the intracellular solvent in the absence of anion, to the occluded (Up) state upon anion binding. Salicylate competes for the anion-binding site and inhibits the voltage-sensor movement, and therefore inhibits the charge transfer and electromotility by displacing Cl(-) from the anion-binding site and by preventing the structural transitions to the contracted state. In addition, can act as a weak Cl(-)/HCO3(-) antiporter across the cell membrane and so regulate the intracellular pH of the outer hair cells (OHCs), while firstly found as being unable to mediate electrogenic anion transport. Moreover, supports a role in cardiac mechanical amplification serving as an elastic element to enhance the actomyosin- based sarcomere contraction system. This chain is Prestin, found in Mus musculus (Mouse).